Reading from the N-terminus, the 416-residue chain is Putative L-glutamine:3-amino-2,3-dideoxy-scyllo-inosose aminotransferase (416 aa).

Residue Lys-199 is modified to N6-(pyridoxal phosphate)lysine.

It belongs to the DegT/DnrJ/EryC1 family. L-glutamine:2-deoxy-scyllo-inosose/scyllo-inosose aminotransferase subfamily. Pyridoxal 5'-phosphate serves as cofactor.

The enzyme catalyses 3-amino-2,3-dideoxy-scyllo-inosose + L-glutamine = 2-deoxystreptamine + 2-oxoglutaramate. The protein operates within metabolic intermediate biosynthesis; 2-deoxystreptamine biosynthesis; 2-deoxystreptamine from D-glucose 6-phosphate: step 4/4. It participates in antibiotic biosynthesis; tobramycin biosynthesis. Its function is as follows. Catalyzes the transamination of 3-amino-2,3-dideoxy-scyllo-inosose (amino-DOI) into 2-deoxystreptamine (DOS). The chain is Putative L-glutamine:3-amino-2,3-dideoxy-scyllo-inosose aminotransferase (tobS2) from Streptoalloteichus tenebrarius (strain ATCC 17920 / DSM 40477 / JCM 4838 / CBS 697.72 / NBRC 16177 / NCIMB 11028 / NRRL B-12390 / A12253. 1 / ISP 5477) (Streptomyces tenebrarius).